Reading from the N-terminus, the 609-residue chain is MIQVLLVTICLAALPYQGSSIILESGNVNDYEIVYPRKVTALPKGAVQPKYEDAMQYELKVNGEPVVLYLEKNKQLFSKDYSETHYSPDGREITTYPLVEDHCYYHGRIENDADSTASISACNGLKGHFKLQGEMYLIEPLKLSNSEAHAVYKYENVEKEDEAPKMCGVTQNWKSYEPIKKASQLVVTAEHQKYNPFRFVELVLVVDKAMVTKNNDDLDKIKTRMYELANTVNEIYRYMYIHVALVGLEIWSNEDKITVKPEAGYTLNAFGEWRKTDLLTRKKHDNAQLLTAIDLDRVIGLAYVGSMCHPKRSTGIIQDYSPINLVVAVIMAHEMGHNLGIHHDSGYCSCGDYACIMRPEISPEPSTFFSNCSYFDCWDFIMNQNPECIVNEPLGTDIISPPVCGNELLEVGEECDCGTPENCQNECCDAATCKLKSGSQCGHGDCCEQCKFSKSGTECRASMSECDPAEHCTGQSSECPADVFHKNGQPCLDNYGYCYNGNCPIMYHQCYDLFGADVYEAEDSCFERNQKGNYYGYCRKENGNKIPCAPEDVKCGRLYCKDNSPGQNNPCKMFYSNEDEHKGMVLPGTKCADGKVCSNGHCVDVATAY.

Positions 1–20 (MIQVLLVTICLAALPYQGSS) are cleaved as a signal peptide. The propeptide occupies 21-189 (IILESGNVND…KKASQLVVTA (169 aa)). Residues 198 to 393 (RFVELVLVVD…QNPECIVNEP (196 aa)) form the Peptidase M12B domain. 2 residues coordinate Ca(2+): E201 and D285. Cystine bridges form between C308–C388, C348–C372, and C350–C355. A Zn(2+)-binding site is contributed by H333. The active site involves E334. Zn(2+) contacts are provided by H337 and H343. A glycan (N-linked (GlcNAc...) asparagine) is linked at N371. Ca(2+) is bound by residues C388, N391, V403, N406, L408, E410, E413, and D416. Residues 401 to 487 (PPVCGNELLE…ECPADVFHKN (87 aa)) form the Disintegrin domain. Intrachain disulfides connect C404-C433, C415-C428, C417-C423, C427-C450, C441-C447, C446-C472, C459-C479, C466-C498, C491-C503, C510-C560, C525-C571, C538-C548, C555-C597, and C591-C602. A D/ECD-tripeptide motif is present at residues 465 to 467 (ECD). Ca(2+)-binding residues include D467, P468, E470, D482, and V483.

It belongs to the venom metalloproteinase (M12B) family. P-III subfamily. P-IIIa sub-subfamily. In terms of assembly, monomer. The cofactor is Zn(2+). As to expression, expressed by the venom gland.

Its subcellular location is the secreted. In terms of biological role, this protein is a zinc metalloprotease from snake venom that possesses hemorrhagic activity. The sequence is that of Zinc metalloproteinase-disintegrin-like from Crotalus durissus durissus (Central American rattlesnake).